The following is a 101-amino-acid chain: Small ribosomal subunit protein uS14 (101 aa).

The protein belongs to the universal ribosomal protein uS14 family. In terms of assembly, part of the 30S ribosomal subunit. Contacts proteins S3 and S10.

Its function is as follows. Binds 16S rRNA, required for the assembly of 30S particles and may also be responsible for determining the conformation of the 16S rRNA at the A site. This is Small ribosomal subunit protein uS14 from Shewanella sediminis (strain HAW-EB3).